The following is a 497-amino-acid chain: Glycerol kinase (497 aa).

ADP is bound at residue threonine 12. Threonine 12, threonine 13, and serine 14 together coordinate ATP. Threonine 12 serves as a coordination point for sn-glycerol 3-phosphate. ADP is bound at residue arginine 16. Sn-glycerol 3-phosphate-binding residues include arginine 82, glutamate 83, tyrosine 134, and aspartate 243. The glycerol site is built by arginine 82, glutamate 83, tyrosine 134, aspartate 243, and glutamine 244. Residues threonine 265 and glycine 308 each coordinate ADP. ATP is bound by residues threonine 265, glycine 308, glutamine 312, and glycine 411. Glycine 411 is a binding site for ADP.

It belongs to the FGGY kinase family.

The catalysed reaction is glycerol + ATP = sn-glycerol 3-phosphate + ADP + H(+). It participates in polyol metabolism; glycerol degradation via glycerol kinase pathway; sn-glycerol 3-phosphate from glycerol: step 1/1. Inhibited by fructose 1,6-bisphosphate (FBP). In terms of biological role, key enzyme in the regulation of glycerol uptake and metabolism. Catalyzes the phosphorylation of glycerol to yield sn-glycerol 3-phosphate. This is Glycerol kinase from Xanthobacter autotrophicus (strain ATCC BAA-1158 / Py2).